Reading from the N-terminus, the 561-residue chain is MAASAPSNSLPPADSYQLLPEAQKAGAAEDALYEAQVKEIEEWWASPRFAGIRRPYSAADVASKRGSQHFRYPSSVMATKLFNLIREREAKGEPIHTMGAIDPVQMTQQAPHQEVLYISGWACSSVLTSTNEVSPDFGDYPYNTVPNQVQRLAKAQSMHDRKQWDTRRKMSPDERSKTPYTDYLRPIIADGDTGHGGLSAVLKLAKLFAENGAAAVHFEDQLHGGKKCGHLAGKVLVPTGEHINRLNAARFQWDVMGSENLVIARTDSESGRLISSAIDVRDHEFILGIADPAVEPLAETLQSMEARGATGAEIDVFEAKWVKSSTLVTFDEAAVAHMKKEGVSQAKIDEYLSATALDRDMGISRRRALASQFTETPVYFNWDVPRTREGYYHFRAGMEAATKRALAFAPYADLLWVETGDPNVEVAAKLGRAVRSVNPGKSLVYNLSPSFNWMAHGFSEEGLKSFIWDIAKEGFTLQLISLAGLHSTATITNELAKKFKTDGMKAYVEVVQRREKELGCDVLTHQKWSGASYIDGILGAIQSGNSSSRSMGEGNTEGQFD.

A disordered region spans residues 154 to 177 (KAQSMHDRKQWDTRRKMSPDERSK). Over residues 157–177 (SMHDRKQWDTRRKMSPDERSK) the composition is skewed to basic and acidic residues. The active site involves cysteine 228.

Belongs to the isocitrate lyase/PEP mutase superfamily. Isocitrate lyase family. Mg(2+) is required as a cofactor.

The protein localises to the mitochondrion matrix. It catalyses the reaction (2S,3R)-3-hydroxybutane-1,2,3-tricarboxylate = pyruvate + succinate. It functions in the pathway organic acid metabolism; propanoate degradation. Component of the methylcitrate cycle that catalyzes the formation of pyruvate and succinate from 2-methylisocitrate during the metabolism of endogenous propionyl-CoA. Plays an important role for growth and development, but also in antagonism, root colonization and induction of defense responses in plants. The sequence is that of 2-methylisocitrate lyase, mitochondrial from Hypocrea atroviridis (strain ATCC 20476 / IMI 206040) (Trichoderma atroviride).